Here is a 306-residue protein sequence, read N- to C-terminus: Pentalenolactone F synthase (306 aa).

Residues H110 and D112 each coordinate Fe cation. 2-oxoglutarate-binding residues include T138 and W258. H273 lines the Fe cation pocket. Position 284 (R284) interacts with 2-oxoglutarate.

It belongs to the TfdA dioxygenase family. Requires Fe(2+) as cofactor.

It catalyses the reaction pentalenolactone D + 2 2-oxoglutarate + 2 O2 = pentalenolactone F + 2 succinate + 2 CO2 + H2O. Its pathway is antibiotic biosynthesis; neopentalenolactone biosynthesis. Its activity is regulated as follows. Activated by ascorbate. Catalyzes the Fe(2+) and alpha-ketoglutarate-dependent oxidation of pentalenolactone D to pentalenolactone F. Also able to catalyze the oxidation of pentalenolactone D to pentalenolactone E. In presence of neopentalenolactone D, mediates production of PL308 and possibly neopentalenolactone E. The chain is Pentalenolactone F synthase (ptlD) from Streptomyces avermitilis (strain ATCC 31267 / DSM 46492 / JCM 5070 / NBRC 14893 / NCIMB 12804 / NRRL 8165 / MA-4680).